Consider the following 603-residue polypeptide: UvrABC system protein C (603 aa).

The GIY-YIG domain maps to 14–92; sequence ELPGVYRMLD…IKSLAPRYNI (79 aa). The 36-residue stretch at 201–236 folds into the UVR domain; the sequence is QEVTRRLTKSMEEASAKLAFEQAAVFRDQIQSLHQV.

Belongs to the UvrC family. Interacts with UvrB in an incision complex.

The protein resides in the cytoplasm. In terms of biological role, the UvrABC repair system catalyzes the recognition and processing of DNA lesions. UvrC both incises the 5' and 3' sides of the lesion. The N-terminal half is responsible for the 3' incision and the C-terminal half is responsible for the 5' incision. This is UvrABC system protein C from Dechloromonas aromatica (strain RCB).